The sequence spans 142 residues: Putative pre-16S rRNA nuclease (142 aa).

The protein belongs to the YqgF nuclease family.

It is found in the cytoplasm. Functionally, could be a nuclease involved in processing of the 5'-end of pre-16S rRNA. The protein is Putative pre-16S rRNA nuclease of Malacoplasma penetrans (strain HF-2) (Mycoplasma penetrans).